The primary structure comprises 469 residues: C4b-binding protein (469 aa).

The first 56 residues, 1–56 (MCAKQQQTLLPTRAAHGRLHRNRDAVAWPFSTLCRVSGPTLFQMTFTAALWVAVFG), serve as a signal peptide directing secretion. Sushi domains lie at 57–117 (KCGP…SCAK), 118–178 (KHCR…ECVI), 179–242 (VKCG…TCEK), 243–301 (IICS…TCEF), 302–357 (DCDL…QCKA), and 358–415 (LCQK…RCEQ). Disulfide bonds link C58/C103, C88/C115, C120/C160, C146/C176, C181/C223, C209/C240, C245/C287, C273/C299, C303/C343, C329/C355, C359/C400, and C386/C413. N74 carries an N-linked (GlcNAc...) asparagine glycan. 3 N-linked (GlcNAc...) asparagine glycosylation sites follow: N227, N275, and N292. N-linked (GlcNAc...) asparagine glycans are attached at residues N366 and N381. An N-linked (GlcNAc...) asparagine glycan is attached at N428.

In terms of assembly, homoheptamer; not covalently linked. Mouse lacks the beta chain of C4BP.

It is found in the secreted. Controls the classical pathway of complement activation. It binds as a cofactor to C3b/C4b inactivator (C3bINA), which then hydrolyzes the complement fragment C4b. It also accelerates the degradation of the C4bC2a complex (C3 convertase) by dissociating the complement fragment C2a. Alpha chain binds C4b. It also interacts with serum amyloid P component. This chain is C4b-binding protein (C4bpa), found in Mus musculus (Mouse).